A 498-amino-acid polypeptide reads, in one-letter code: Signal recognition particle receptor FtsY (498 aa).

Disordered regions lie at residues 1–130 (MGLF…PNQS) and 147–200 (KVES…YNRS). The span at 36–46 (ALLAETAETAE) shows a compositional bias: low complexity. A compositionally biased stretch (polar residues) spans 103-120 (SENSVAAVQNNTETMPSQ). GTP-binding positions include 301–308 (GVNGVGKT), 383–387 (DTAGR), and 447–450 (TKID).

Belongs to the GTP-binding SRP family. FtsY subfamily. Part of the signal recognition particle protein translocation system, which is composed of SRP and FtsY.

It localises to the cell membrane. Its subcellular location is the cytoplasm. It catalyses the reaction GTP + H2O = GDP + phosphate + H(+). Involved in targeting and insertion of nascent membrane proteins into the cytoplasmic membrane. Acts as a receptor for the complex formed by the signal recognition particle (SRP) and the ribosome-nascent chain (RNC). This is Signal recognition particle receptor FtsY from Streptococcus mutans serotype c (strain ATCC 700610 / UA159).